We begin with the raw amino-acid sequence, 361 residues long: Core-capsid bridging protein (361 aa).

A compositionally biased stretch (basic residues) spans 311–321 (RRRRVARRSKS). The tract at residues 311 to 331 (RRRRVARRSKSTGRFVAAPRK) is disordered.

Belongs to the adenoviridae core-capsid bridging protein family. As to quaternary structure, monomer. Homodimer. Exists in equilibrium between monomers and dimers in solution. Interacts with the histone-like nucleoprotein; this interactions bridge the virus core to the capsid. Interacts with core protein X; this interactions bridge the virus core to the capsid. Interacts with the endosome lysis protein VI; this interactions bridge the virus core to the capsid. Interacts with the peripentonal hexons. Interacts with host NPM1; this interaction might play a role in virus assembly.

The protein localises to the virion. It is found in the host nucleus. The protein resides in the host nucleolus. Associates loosely with the viral DNA to form an outer shell around the nucleoprotein-DNA complex and links it with the capsid by binding the endosome lysis protein. Dissociates from the viral genome during entry. Might be involved in nuclear capsid assembly of the viral particles through its association with NPM1/nucleophosmin. This is Core-capsid bridging protein from Bovine adenovirus 2 (BAdV-2).